A 176-amino-acid chain; its full sequence is Peptide deformylase (176 aa).

2 residues coordinate Fe cation: C94 and H136. E137 is an active-site residue. A Fe cation-binding site is contributed by H140.

It belongs to the polypeptide deformylase family. Requires Fe(2+) as cofactor.

It catalyses the reaction N-terminal N-formyl-L-methionyl-[peptide] + H2O = N-terminal L-methionyl-[peptide] + formate. Its function is as follows. Removes the formyl group from the N-terminal Met of newly synthesized proteins. Requires at least a dipeptide for an efficient rate of reaction. N-terminal L-methionine is a prerequisite for activity but the enzyme has broad specificity at other positions. In Bartonella quintana (strain Toulouse) (Rochalimaea quintana), this protein is Peptide deformylase.